The sequence spans 205 residues: NADH-quinone oxidoreductase subunit J (205 aa).

Helical transmembrane passes span 1–21, 26–46, 54–74, 89–109, and 142–162; these read MPIF…CVVL, VYSV…MILL, LLIV…IMML, LSLS…TIIL, and FMLP…SCIT.

Belongs to the complex I subunit 6 family.

Its subcellular location is the cell membrane. It carries out the reaction a quinone + NADH + 5 H(+)(in) = a quinol + NAD(+) + 4 H(+)(out). In terms of biological role, NDH-1 shuttles electrons from NADH, via FMN and iron-sulfur (Fe-S) centers, to quinones in the respiratory chain. Couples the redox reaction to proton translocation (for every two electrons transferred, four hydrogen ions are translocated across the cytoplasmic membrane), and thus conserves the redox energy in a proton gradient. The sequence is that of NADH-quinone oxidoreductase subunit J (nuoJ) from Rickettsia prowazekii (strain Madrid E).